The chain runs to 772 residues: Semaphorin-3A (772 aa).

A signal peptide spans 1–22; it reads MGWLRGIALLSLGVLLAGRVNC. Residues 31–514 form the Sema domain; the sequence is RLKLSYKEML…SATGVSQLPL (484 aa). An N-linked (GlcNAc...) asparagine glycan is attached at N53. C103 and C114 are joined by a disulfide. N125 carries an N-linked (GlcNAc...) asparagine glycan. Cystine bridges form between C132–C141, C269–C381, C293–C341, and C517–C535. An Ig-like C2-type domain is found at 576-665; that stretch reads PSGQTLEEKI…GFIQTLLKVT (90 aa). N591 carries an N-linked (GlcNAc...) asparagine glycan. A disulfide bridge links C650 with C723. The interval 730–772 is disordered; sequence DRKQRRQRPANAQVNTNKWKHLQENKKGRNRRTHEFERAPRSV. Positions 750–772 are enriched in basic and acidic residues; the sequence is HLQENKKGRNRRTHEFERAPRSV.

This sequence belongs to the semaphorin family. In terms of tissue distribution, expressed at relatively high levels in brain and muscle, moderate levels in lung, bursa, and heart and virtually absent in liver. Collapsin-1, -2, -3, and -5 bind to overlapping but distinct axon tracts.

It is found in the secreted. Induces the collapse and paralysis of neuronal growth cones. Could serve as a ligand that guides specific growth cones by a motility-inhibiting mechanism. Binds to neuropilin. The protein is Semaphorin-3A (SEMA3A) of Gallus gallus (Chicken).